The following is a 225-amino-acid chain: uncharacterized protein (225 aa).

This is an uncharacterized protein from Methanocaldococcus jannaschii (strain ATCC 43067 / DSM 2661 / JAL-1 / JCM 10045 / NBRC 100440) (Methanococcus jannaschii).